Consider the following 188-residue polypeptide: ATP-dependent Clp protease proteolytic subunit 1 (188 aa).

The Nucleophile role is filled by Ser-90. Residue His-115 is part of the active site.

The protein belongs to the peptidase S14 family. As to quaternary structure, fourteen ClpP subunits assemble into 2 heptameric rings which stack back to back to give a disk-like structure with a central cavity, resembling the structure of eukaryotic proteasomes.

The protein localises to the cytoplasm. It catalyses the reaction Hydrolysis of proteins to small peptides in the presence of ATP and magnesium. alpha-casein is the usual test substrate. In the absence of ATP, only oligopeptides shorter than five residues are hydrolyzed (such as succinyl-Leu-Tyr-|-NHMec, and Leu-Tyr-Leu-|-Tyr-Trp, in which cleavage of the -Tyr-|-Leu- and -Tyr-|-Trp bonds also occurs).. Cleaves peptides in various proteins in a process that requires ATP hydrolysis. Has a chymotrypsin-like activity. Plays a major role in the degradation of misfolded proteins. In Corynebacterium jeikeium (strain K411), this protein is ATP-dependent Clp protease proteolytic subunit 1.